Reading from the N-terminus, the 286-residue chain is MRKDEIMHIVSCADDNYARHLGGMFVSLLTNMDQEREVKLYVIDGGIKPDNKKRLEETTLKFGVPIEFLEVDTNMYEHAVESSHITKAAYYRISIPDLIKDESIKRMIYIDCDALVLEDISKLWDLDIAPYTVAAVEDAGQHERLKEMNVTDTGKYFNSGIMIIDFESWRKQNITEKVINFINEHPDEDFLVLHDQDALNAILYDQWYELHPRWNAQTYIMLKLKTPSTLLGRKQYNETRENPAIVHFCGGEKPWNSNTKHPYRDEYFHYMSYTKWNTIGNPAINQ.

Residues 12-17 (CADDNY) and 111-112 (DC) each bind UDP. Residues Asp-111, Asp-113, and His-247 each coordinate Mn(2+). Residue 247–253 (HFCGGEK) coordinates UDP.

The protein belongs to the glycosyltransferase 8 family.

This Bacillus subtilis (strain 168) protein is General stress protein A (gspA).